A 667-amino-acid polypeptide reads, in one-letter code: Probable E3 ubiquitin-protein ligase HIP1 (667 aa).

2 disordered regions span residues 142 to 163 (NGASQGSELHGGCSHTGSNGQA) and 285 to 311 (TTAGLSSSSYDPSGGNNNSGGSQRSFR). The segment covering 288–309 (GLSSSSYDPSGGNNNSGGSQRS) has biased composition (low complexity). The segment at 620-661 (CCICQEEYVDGDDLGTLDCGHDFHVGCVRQWLVVKNTCPICK) adopts an RING-type; atypical zinc-finger fold.

It belongs to the RING-type zinc finger family. As to quaternary structure, interacts with HAL3.

The catalysed reaction is S-ubiquitinyl-[E2 ubiquitin-conjugating enzyme]-L-cysteine + [acceptor protein]-L-lysine = [E2 ubiquitin-conjugating enzyme]-L-cysteine + N(6)-ubiquitinyl-[acceptor protein]-L-lysine.. The protein operates within protein modification; protein ubiquitination. Functionally, probable E3 ubiquitin-protein ligase that functions downstream of HAL3 and is required for HAL3-regulated plant growth. Activation of HIP1 by HAL3 may lead to the degradation of cell cycle suppressors, resulting in enhancement of cell division and plant growth. In Oryza sativa subsp. japonica (Rice), this protein is Probable E3 ubiquitin-protein ligase HIP1 (HIP1).